Reading from the N-terminus, the 104-residue chain is Putative Fis-like DNA-binding protein (104 aa).

Positions 80 to 99 (QTKASELLGLNRGTLRKKLK) form a DNA-binding region, H-T-H motif.

The protein belongs to the transcriptional regulatory Fis family.

This chain is Putative Fis-like DNA-binding protein, found in Pseudomonas aeruginosa (strain ATCC 15692 / DSM 22644 / CIP 104116 / JCM 14847 / LMG 12228 / 1C / PRS 101 / PAO1).